The chain runs to 563 residues: Light-independent protochlorophyllide reductase subunit B (563 aa).

Aspartate 36 is a [4Fe-4S] cluster binding site. Aspartate 349 serves as the catalytic Proton donor. 484 to 485 contacts substrate; the sequence is GM.

The protein belongs to the ChlB/BchB/BchZ family. As to quaternary structure, protochlorophyllide reductase is composed of three subunits; ChlL, ChlN and ChlB. Forms a heterotetramer of two ChlB and two ChlN subunits. Requires [4Fe-4S] cluster as cofactor.

The protein resides in the plastid. It is found in the chloroplast. It catalyses the reaction chlorophyllide a + oxidized 2[4Fe-4S]-[ferredoxin] + 2 ADP + 2 phosphate = protochlorophyllide a + reduced 2[4Fe-4S]-[ferredoxin] + 2 ATP + 2 H2O. Its pathway is porphyrin-containing compound metabolism; chlorophyll biosynthesis (light-independent). In terms of biological role, component of the dark-operative protochlorophyllide reductase (DPOR) that uses Mg-ATP and reduced ferredoxin to reduce ring D of protochlorophyllide (Pchlide) to form chlorophyllide a (Chlide). This reaction is light-independent. The NB-protein (ChlN-ChlB) is the catalytic component of the complex. This chain is Light-independent protochlorophyllide reductase subunit B, found in Chlamydomonas moewusii (Chlamydomonas eugametos).